Consider the following 553-residue polypeptide: CTP synthase (553 aa).

Positions 1-277 are amidoligase domain; it reads MPTEPETDYD…DQYVMEELDI (277 aa). Residue serine 26 coordinates CTP. Serine 26 serves as a coordination point for UTP. Residues 27 to 32 and aspartate 84 contribute to the ATP site; that span reads GLGKGI. Residues aspartate 84 and glutamate 152 each contribute to the Mg(2+) site. CTP is bound by residues 159-161, 198-203, and lysine 234; these read DIE and KTKPTQ. Residues 198–203 and lysine 234 contribute to the UTP site; that span reads KTKPTQ. Residue valine 252 coordinates ATP. In terms of domain architecture, Glutamine amidotransferase type-1 spans 307 to 544; sequence LVGKYDLEDA…LEAVLGDDPH (238 aa). Glycine 364 is an L-glutamine binding site. Residue cysteine 391 is the Nucleophile; for glutamine hydrolysis of the active site. Residues 392–395, glutamate 415, and arginine 472 contribute to the L-glutamine site; that span reads LGFQ. Catalysis depends on residues histidine 517 and glutamate 519.

This sequence belongs to the CTP synthase family. As to quaternary structure, homotetramer.

Its subcellular location is the cytoplasm. It carries out the reaction UTP + L-glutamine + ATP + H2O = CTP + L-glutamate + ADP + phosphate + 2 H(+). It catalyses the reaction L-glutamine + H2O = L-glutamate + NH4(+). The catalysed reaction is UTP + NH4(+) + ATP = CTP + ADP + phosphate + 2 H(+). The protein operates within pyrimidine metabolism; CTP biosynthesis via de novo pathway; CTP from UDP: step 2/2. With respect to regulation, allosterically activated by GTP, when glutamine is the substrate; GTP has no effect on the reaction when ammonia is the substrate. The allosteric effector GTP functions by stabilizing the protein conformation that binds the tetrahedral intermediate(s) formed during glutamine hydrolysis. Inhibited by the product CTP, via allosteric rather than competitive inhibition. Inhibited by 6-diazo-5-oxo-l-norleucine (DON). In terms of biological role, catalyzes the ATP-dependent amination of UTP to CTP with either L-glutamine or ammonia as the source of nitrogen. Regulates intracellular CTP levels through interactions with the four ribonucleotide triphosphates. This Haloarcula hispanica (strain ATCC 33960 / DSM 4426 / JCM 8911 / NBRC 102182 / NCIMB 2187 / VKM B-1755) protein is CTP synthase.